The chain runs to 293 residues: Pyridoxal 5'-phosphate synthase subunit PdxS (293 aa).

Residue aspartate 23 participates in D-ribose 5-phosphate binding. Lysine 80 serves as the catalytic Schiff-base intermediate with D-ribose 5-phosphate. Glycine 152 provides a ligand contact to D-ribose 5-phosphate. Arginine 164 provides a ligand contact to D-glyceraldehyde 3-phosphate. Residues glycine 213 and 234–235 (GS) contribute to the D-ribose 5-phosphate site.

It belongs to the PdxS/SNZ family. In the presence of PdxT, forms a dodecamer of heterodimers.

It carries out the reaction aldehydo-D-ribose 5-phosphate + D-glyceraldehyde 3-phosphate + L-glutamine = pyridoxal 5'-phosphate + L-glutamate + phosphate + 3 H2O + H(+). It participates in cofactor biosynthesis; pyridoxal 5'-phosphate biosynthesis. Functionally, catalyzes the formation of pyridoxal 5'-phosphate from ribose 5-phosphate (RBP), glyceraldehyde 3-phosphate (G3P) and ammonia. The ammonia is provided by the PdxT subunit. Can also use ribulose 5-phosphate and dihydroxyacetone phosphate as substrates, resulting from enzyme-catalyzed isomerization of RBP and G3P, respectively. This chain is Pyridoxal 5'-phosphate synthase subunit PdxS, found in Roseiflexus sp. (strain RS-1).